The chain runs to 52 residues: Large ribosomal subunit protein bL33 (52 aa).

This sequence belongs to the bacterial ribosomal protein bL33 family.

The protein is Large ribosomal subunit protein bL33 of Anaeromyxobacter sp. (strain Fw109-5).